We begin with the raw amino-acid sequence, 1143 residues long: MPPPRTREGRDRRDHHRAPSEEEALEKWDWNCPETRRLLEDAFFREEDYIRQGSEECQKFWTFFERLQRFQNLKTSRKEEKDPGQPKHSIPALADLPRTYDPRYRINLSVLGPATRGSQGLGRHLPAERVAEFRRALLHYLDFGQKQAFGRLAKLQRERAALPIAQYGNRILQTLKEHQVVVVAGDTGCGKSTQVPQYLLAAGFSHVACTQPRRIACISLAKRVGFESLSQYGSQVGYQIRFESTRSAATKIVFLTVGLLLRQIQREPSLPQYEVLIVDEVHERHLHNDFLLGVLQRLLPTRPDLKVILMSATINISLFSSYFSNAPVVQVPGRLFPITVVYQPQEAEPTTSKSEKLDPRPFLRVLESIDHKYPPEERGDLLVFLSGMAEISAVLEAAQTYASHTQRWVVLPLHSALSVADQDKVFDVAPPGVRKCILSTNIAETSVTIDGIRFVVDSGKVKEMSYDPQAKLQRLQEFWISQASAEQRKGRAGRTGPGVCFRLYAESDYDAFAPYPVPEIRRVALDSLVLQMKSMSVGDPRTFPFIEPPPPASLETAILYLRDQGALDSSEALTPIGSLLAQLPVDVVIGKMLILGSMFSLVEPVLTIAAALSVQSPFTRSAQSSPECAAARRPLESDQGDPFTLFNVFNAWVQVKSERSRNSRKWCRRRGIEEHRLYEMANLRRQFKELLEDHGLLAGAQAAQVGDSYSRLQQRRERRALHQLKRQHEEGAGRRRKVLRLQEEQDGGSSDEDRAGPAPPGASDGVDIQDVKFKLRHDLAQLQAAASSAQDLSREQLALLKLVLGRGLYPQLAVPDAFNSSRKDSDQIFHTQAKQGAVLHPTCVFAGSPEVLHAQELEASNCDGSRDDKDKMSSKHQLLSFVSLLETNKPYLVNCVRIPALQSLLLFSRSLDTNGDCSRLVADGWLELQLADSESAIRLLAASLRLRARWESALDRQLAHQAQQQLEEEEEDTPVSPKEVATLSKELLQFTASKIPYSLRRLTGLEVQNMYVGPQTIPATPHLPGLFGSSTLSPHPTKGGYAVTDFLTYNCLTNDTDLYSDCLRTFWTCPHCGLHAPLTPLERIAHENTCPQAPQDGPPGAEEAALETLQKTSVLQRPYHCEACGKDFLFTPTEVLRHRKQHV.

Disordered regions lie at residues Met-1 to Ala-24 and Thr-75 to Ala-94. A compositionally biased stretch (basic and acidic residues) spans Ser-76–Gln-85. One can recognise a Helicase ATP-binding domain in the interval Leu-172–Pro-332. Gly-185–Ser-192 serves as a coordination point for ATP. The short motif at Asp-279–His-282 is the DEAH box element. Residues Ser-368–Ser-536 form the Helicase C-terminal domain. The negatively regulates interaction with UPF1 stretch occupies residues Gln-701–Asp-955. Positions Leu-724–Val-766 are disordered. A phosphoserine mark is found at Ser-749 and Ser-750. The required for phosphorylation of UPF1. Not required for interaction with UPF1 stretch occupies residues Pro-810–Val-1143. The interval Gln-957 to Val-1143 is required for the interaction with SMG1 and subsequent phosphorylation of UPF1.

The protein belongs to the DEAD box helicase family. DEAH subfamily. In terms of assembly, forms a complex with RUVBL1 and RUVBL2. Part of a complex composed of SMG1, DHX34 and UPF1; within the complex DHX34 acts as a scaffolding protein to facilitate SMG1 phosphorylation of UPF1. Interacts with UPF1, MOV10, EIF4A3, XRN2, SMG6, SMG7, SMG9, UPF3A, UPF3B, CASC3/MLN51, XRN1, DIS3 and DCP1A; the interactions are RNA-independent. Interacts with NCBP1/CPB80; the interaction is RNA-dependent. Interacts (via C-terminus) with SMG1; the interaction is RNA-independent. Expressed in whole blood, testis and spleen. Also expressed in the brain.

It carries out the reaction ATP + H2O = ADP + phosphate + H(+). Functionally, probable ATP-binding RNA helicase required for nonsense-mediated decay (NMD) degradation of mRNA transcripts containing premature stop codons. Promotes the phosphorylation of UPF1 along with its interaction with key NMD pathway proteins UPF2 and EIF4A3. Interaction with the RUVBL1-RUVBL2 complex results in loss of nucleotide binding ability and ATP hydrolysis of the complex. Negatively regulates the nucleotide binding ability and ATP hydrolysis of the RUVBL1-RUVBL2 complex via induction of N-terminus conformation changes of the RUVBL2 subunits. This is Probable ATP-dependent RNA helicase DHX34 from Homo sapiens (Human).